The sequence spans 267 residues: Thiazole synthase (267 aa).

Residue lysine 110 is the Schiff-base intermediate with DXP of the active site. Residues glycine 171, 197-198 (AG), and 219-220 (NT) each bind 1-deoxy-D-xylulose 5-phosphate.

Belongs to the ThiG family. Homotetramer. Forms heterodimers with either ThiH or ThiS.

The protein localises to the cytoplasm. It carries out the reaction [ThiS sulfur-carrier protein]-C-terminal-Gly-aminoethanethioate + 2-iminoacetate + 1-deoxy-D-xylulose 5-phosphate = [ThiS sulfur-carrier protein]-C-terminal Gly-Gly + 2-[(2R,5Z)-2-carboxy-4-methylthiazol-5(2H)-ylidene]ethyl phosphate + 2 H2O + H(+). It functions in the pathway cofactor biosynthesis; thiamine diphosphate biosynthesis. Its function is as follows. Catalyzes the rearrangement of 1-deoxy-D-xylulose 5-phosphate (DXP) to produce the thiazole phosphate moiety of thiamine. Sulfur is provided by the thiocarboxylate moiety of the carrier protein ThiS. In vitro, sulfur can be provided by H(2)S. This chain is Thiazole synthase, found in Maricaulis maris (strain MCS10) (Caulobacter maris).